The primary structure comprises 149 residues: 3-dehydroquinate dehydratase (149 aa).

The active-site Proton acceptor is the tyrosine 26. Substrate-binding residues include asparagine 77, histidine 83, and aspartate 90. The Proton donor role is filled by histidine 103. Substrate-binding positions include 104–105 (LS) and arginine 114.

Belongs to the type-II 3-dehydroquinase family. Homododecamer.

It carries out the reaction 3-dehydroquinate = 3-dehydroshikimate + H2O. It functions in the pathway metabolic intermediate biosynthesis; chorismate biosynthesis; chorismate from D-erythrose 4-phosphate and phosphoenolpyruvate: step 3/7. In terms of biological role, catalyzes a trans-dehydration via an enolate intermediate. The polypeptide is 3-dehydroquinate dehydratase (Vibrio vulnificus (strain YJ016)).